The following is a 427-amino-acid chain: 3-phosphoshikimate 1-carboxyvinyltransferase (427 aa).

3-phosphoshikimate is bound by residues Lys-22, Ser-23, and Arg-27. Lys-22 provides a ligand contact to phosphoenolpyruvate. 2 residues coordinate phosphoenolpyruvate: Gly-94 and Arg-122. Residues Ser-165, Gln-167, Asp-313, and Lys-340 each contribute to the 3-phosphoshikimate site. Gln-167 provides a ligand contact to phosphoenolpyruvate. Asp-313 serves as the catalytic Proton acceptor. The phosphoenolpyruvate site is built by Arg-344 and Arg-386.

Belongs to the EPSP synthase family. In terms of assembly, monomer.

The protein localises to the cytoplasm. The enzyme catalyses 3-phosphoshikimate + phosphoenolpyruvate = 5-O-(1-carboxyvinyl)-3-phosphoshikimate + phosphate. It functions in the pathway metabolic intermediate biosynthesis; chorismate biosynthesis; chorismate from D-erythrose 4-phosphate and phosphoenolpyruvate: step 6/7. Functionally, catalyzes the transfer of the enolpyruvyl moiety of phosphoenolpyruvate (PEP) to the 5-hydroxyl of shikimate-3-phosphate (S3P) to produce enolpyruvyl shikimate-3-phosphate and inorganic phosphate. In Koribacter versatilis (strain Ellin345), this protein is 3-phosphoshikimate 1-carboxyvinyltransferase.